We begin with the raw amino-acid sequence, 199 residues long: MAP6 domain-containing protein 1 (199 aa).

S-palmitoyl cysteine attachment occurs at residues Cys5, Cys10, and Cys11. Positions 33–110 (YSDLDSEEPG…SAQSSAPPAP (78 aa)) are disordered. Ser38 carries the post-translational modification Phosphoserine. Mn regions lie at residues 130 to 143 (TTSY…WTGV) and 165 to 177 (DSSP…VPEV). Ser167 bears the Phosphoserine mark.

It belongs to the STOP family. In terms of assembly, interacts with calmodulin. Post-translationally, palmitoylated. Palmitoylation enhances association with microtubules.

Its subcellular location is the golgi apparatus. The protein localises to the cytoplasm. The protein resides in the cytoskeleton. May have microtubule-stabilizing activity. The sequence is that of MAP6 domain-containing protein 1 (MAP6D1) from Homo sapiens (Human).